We begin with the raw amino-acid sequence, 816 residues long: S-layer protein (816 aa).

An N-terminal signal peptide occupies residues 1-29; the sequence is MAKTNSYKKVIAGTMTAAMVAGVVSPVAA. SLH domains follow at residues 30-93, 94-150, and 152-215; these read AGKS…DAKP, SFAD…KVNG, and PATK…VAKV. The BIG2 domain maps to 403–480; that stretch reads FTSKDFKQND…TVKDSKGKEL (78 aa).

Its subcellular location is the secreted. It localises to the cell wall. The protein resides in the S-layer. Its function is as follows. The S-layer is a paracrystalline mono-layered assembly of proteins which coat the surface of bacteria. In Bacillus thuringiensis subsp. finitimus, this protein is S-layer protein.